Reading from the N-terminus, the 261-residue chain is Bcl-2-binding component 3, isoforms 3/4 (261 aa).

Positions Gln-27 to Met-261 are disordered. Positions Pro-40 to Gly-50 are enriched in low complexity. Over residues Pro-53–Pro-63 the composition is skewed to pro residues. Low complexity predominate over residues Pro-64 to Pro-73. 2 stretches are compositionally biased toward basic residues: residues Leu-74–Pro-87 and Arg-95–Pro-106. Residues Pro-124–Pro-146 show a composition bias toward low complexity. A compositionally biased stretch (gly residues) spans Gly-147–Asp-171. The span at Arg-172–Ala-197 shows a compositional bias: low complexity.

In terms of assembly, does not interact with BCL2.

In terms of biological role, does not affect cell growth. The sequence is that of Bcl-2-binding component 3, isoforms 3/4 (BBC3) from Homo sapiens (Human).